The sequence spans 251 residues: Probable transcriptional regulatory protein PMI1113 (251 aa).

Belongs to the TACO1 family.

Its subcellular location is the cytoplasm. This is Probable transcriptional regulatory protein PMI1113 from Proteus mirabilis (strain HI4320).